A 185-amino-acid chain; its full sequence is Ribosome-recycling factor (185 aa).

Belongs to the RRF family.

The protein resides in the cytoplasm. Its function is as follows. Responsible for the release of ribosomes from messenger RNA at the termination of protein biosynthesis. May increase the efficiency of translation by recycling ribosomes from one round of translation to another. The chain is Ribosome-recycling factor from Shewanella sp. (strain W3-18-1).